Reading from the N-terminus, the 531-residue chain is Peptide chain release factor 3 (531 aa).

In terms of domain architecture, tr-type G spans arginine 10–lysine 278. Residues serine 19–threonine 26, aspartate 87–histidine 91, and asparagine 141–aspartate 144 each bind GTP.

It belongs to the TRAFAC class translation factor GTPase superfamily. Classic translation factor GTPase family. PrfC subfamily.

Its subcellular location is the cytoplasm. Its function is as follows. Increases the formation of ribosomal termination complexes and stimulates activities of RF-1 and RF-2. It binds guanine nucleotides and has strong preference for UGA stop codons. It may interact directly with the ribosome. The stimulation of RF-1 and RF-2 is significantly reduced by GTP and GDP, but not by GMP. The protein is Peptide chain release factor 3 of Neisseria meningitidis serogroup A / serotype 4A (strain DSM 15465 / Z2491).